Consider the following 404-residue polypeptide: NADH-quinone oxidoreductase subunit D (404 aa).

The protein belongs to the complex I 49 kDa subunit family. As to quaternary structure, NDH-1 is composed of 14 different subunits. Subunits NuoB, C, D, E, F, and G constitute the peripheral sector of the complex.

It is found in the cell inner membrane. It catalyses the reaction a quinone + NADH + 5 H(+)(in) = a quinol + NAD(+) + 4 H(+)(out). Its function is as follows. NDH-1 shuttles electrons from NADH, via FMN and iron-sulfur (Fe-S) centers, to quinones in the respiratory chain. The immediate electron acceptor for the enzyme in this species is believed to be ubiquinone. Couples the redox reaction to proton translocation (for every two electrons transferred, four hydrogen ions are translocated across the cytoplasmic membrane), and thus conserves the redox energy in a proton gradient. The protein is NADH-quinone oxidoreductase subunit D of Leptospira borgpetersenii serovar Hardjo-bovis (strain JB197).